The chain runs to 130 residues: MAENQYYGTGRRKSSAARVFIKPGSGNIVINKRSLDEYFGRPTSRMVVKQPLELVELTEKLDLYVTVKGGGISGQAGAIRHGITRALMEYDESLRPTLRAAGYVTRDARCVERKKVGLRKARRRPQFSKR.

Belongs to the universal ribosomal protein uS9 family.

The chain is Small ribosomal subunit protein uS9 from Vibrio campbellii (strain ATCC BAA-1116).